Reading from the N-terminus, the 420-residue chain is Dihydrolipoyllysine-residue succinyltransferase component of 2-oxoglutarate dehydrogenase complex (420 aa).

One can recognise a Lipoyl-binding domain in the interval 1–76 (MAEVKVPELA…EVGQAVAVVG (76 aa)). An N6-lipoyllysine modification is found at K42. The disordered stretch occupies residues 75-201 (VGEGQVNTSN…EKMSRRKKTA (127 aa)). Polar residues predominate over residues 81–90 (NTSNDSSNES). Positions 91–102 (SQKDEAKEKETP) are enriched in basic and acidic residues. Residues 103–127 (KQSNPNSSESENTQDNSQQRINATP) are compositionally biased toward polar residues. In terms of domain architecture, Peripheral subunit-binding (PSBD) spans 124–160 (NATPSARRHARKNGVDLSEVSGKGNDVLRKDDVENSQ). Basic and acidic residues predominate over residues 149–158 (DVLRKDDVEN). Residues 159-188 (SQKSSSQTAKSESKSQNSGSKQSNNNPSKP) show a composition bias toward low complexity. Residues H391 and D395 contribute to the active site.

It belongs to the 2-oxoacid dehydrogenase family. In terms of assembly, forms a 24-polypeptide structural core with octahedral symmetry. Part of the 2-oxoglutarate dehydrogenase (OGDH) complex composed of E1 (2-oxoglutarate dehydrogenase), E2 (dihydrolipoamide succinyltransferase) and E3 (dihydrolipoamide dehydrogenase); the complex contains multiple copies of the three enzymatic components (E1, E2 and E3). (R)-lipoate serves as cofactor.

It carries out the reaction N(6)-[(R)-dihydrolipoyl]-L-lysyl-[protein] + succinyl-CoA = N(6)-[(R)-S(8)-succinyldihydrolipoyl]-L-lysyl-[protein] + CoA. The protein operates within amino-acid degradation; L-lysine degradation via saccharopine pathway; glutaryl-CoA from L-lysine: step 6/6. E2 component of the 2-oxoglutarate dehydrogenase (OGDH) complex which catalyzes the second step in the conversion of 2-oxoglutarate to succinyl-CoA and CO(2). The sequence is that of Dihydrolipoyllysine-residue succinyltransferase component of 2-oxoglutarate dehydrogenase complex (odhB) from Staphylococcus epidermidis (strain ATCC 12228 / FDA PCI 1200).